Here is a 157-residue protein sequence, read N- to C-terminus: S-ribosylhomocysteine lyase (157 aa).

His-54, His-58, and Cys-124 together coordinate Fe cation.

The protein belongs to the LuxS family. In terms of assembly, homodimer. Fe cation is required as a cofactor.

The catalysed reaction is S-(5-deoxy-D-ribos-5-yl)-L-homocysteine = (S)-4,5-dihydroxypentane-2,3-dione + L-homocysteine. In terms of biological role, involved in the synthesis of autoinducer 2 (AI-2) which is secreted by bacteria and is used to communicate both the cell density and the metabolic potential of the environment. The regulation of gene expression in response to changes in cell density is called quorum sensing. Catalyzes the transformation of S-ribosylhomocysteine (RHC) to homocysteine (HC) and 4,5-dihydroxy-2,3-pentadione (DPD). The protein is S-ribosylhomocysteine lyase of Pediococcus pentosaceus (strain ATCC 25745 / CCUG 21536 / LMG 10740 / 183-1w).